A 242-amino-acid polypeptide reads, in one-letter code: 3-dehydroquinate dehydratase (242 aa).

3-dehydroquinate-binding positions include 39–41 and arginine 73; that span reads EIR. The active-site Proton donor/acceptor is histidine 135. The Schiff-base intermediate with substrate role is filled by lysine 162. 2 residues coordinate 3-dehydroquinate: arginine 203 and glutamine 228.

It belongs to the type-I 3-dehydroquinase family. As to quaternary structure, homodimer.

The enzyme catalyses 3-dehydroquinate = 3-dehydroshikimate + H2O. It functions in the pathway metabolic intermediate biosynthesis; chorismate biosynthesis; chorismate from D-erythrose 4-phosphate and phosphoenolpyruvate: step 3/7. In terms of biological role, involved in the third step of the chorismate pathway, which leads to the biosynthesis of aromatic amino acids. Catalyzes the cis-dehydration of 3-dehydroquinate (DHQ) and introduces the first double bond of the aromatic ring to yield 3-dehydroshikimate. In Methanosarcina barkeri (strain Fusaro / DSM 804), this protein is 3-dehydroquinate dehydratase.